Consider the following 520-residue polypeptide: Transactivator/viroplasmin protein (520 aa).

The segment at Val486–Asp520 is disordered.

This sequence belongs to the caulimoviridae viroplasmin family.

The protein resides in the host cytoplasm. Functionally, enhances the ribosomal termination-reinitiation event leading to the translation of major open reading frames on the polycistronic viral RNAs. In Cauliflower mosaic virus (strain NY8153) (CaMV), this protein is Transactivator/viroplasmin protein.